Consider the following 394-residue polypeptide: MIEVVAELSRGPVFLAGEALECVVTVTNPLPPTATSASSEALAWASAQIHCQFHASESRVALPPPDSSQPDVQPESQTVLLPHRGERGQCILSTPPKILFCDLRLDPGESKSYSYSEVLPVEGPPSFRGQSVKYVYKLTIGCQRVNSPITLLRVPLRVLVLTGLQDVRFPQDEAVAPSSPFLEEDEGGKKDSWLTELAGERLMAATSCRSLHLYNISDGRGKVGTFGIFKSVYRLGEDVVGTLNLGEGTVACLQYSVSLQTEERVQPEYQRRRGAGGAPSVSHITHARHQESCLHTTRTSFSLPIPLSSTPGFCTAIVSLKWRLHFEFVTSREPGLVLLPPVEQPEPATWTGPEQVPVDTFSWDLPIKPEASHTFLSVQPASYCYSVRSHIRAI.

This sequence belongs to the RGP1 family. In terms of assembly, forms a complex with RIC1; the interaction enhances RAB6A GTPase activity. Interacts with RIC1. Interacts with RAB6A; the interaction is direct with a preference for RAB6A-GDP. Interacts with RAB33B.

It is found in the cytoplasm. The protein resides in the cytosol. The protein localises to the membrane. The RIC1-RGP1 complex acts as a guanine nucleotide exchange factor (GEF), which activates RAB6A by exchanging bound GDP for free GTP and may thereby required for efficient fusion of endosome-derived vesicles with the Golgi compartment. The RIC1-RGP1 complex participates in the recycling of mannose-6-phosphate receptors. The protein is RAB6A-GEF complex partner protein 2 of Bos taurus (Bovine).